Reading from the N-terminus, the 506-residue chain is Maturase K (506 aa).

This sequence belongs to the intron maturase 2 family. MatK subfamily.

The protein localises to the plastid. It is found in the chloroplast. In terms of biological role, usually encoded in the trnK tRNA gene intron. Probably assists in splicing its own and other chloroplast group II introns. The polypeptide is Maturase K (Angiopteris evecta (Mule's foot fern)).